We begin with the raw amino-acid sequence, 291 residues long: Flap endonuclease (291 aa).

The helical arch stretch occupies residues 82-116 (YKGNRDEKYAQRTEEEKALDEQFFEYLKDAFELCK). Lys-83 serves as a coordination point for DNA. Mg(2+) is bound by residues Asp-130, Asp-153, Asp-155, and Asp-201. Positions 188–224 (DVEQFISLKAIMGDLGDNIRGVEGIGAKRGYNIIREF) are DNA-binding; H3TH. The 5'-3' exonuclease domain maps to 190–263 (EQFISLKAIM…FRNLILVDLP (74 aa)). K(+) contacts are provided by Val-209 and Ile-212.

The cofactor is Mg(2+). K(+) serves as cofactor.

The catalysed reaction is Exonucleolytic cleavage in the 5'- to 3'-direction to yield nucleoside 5'-phosphates.. Its activity is regulated as follows. Inhibited by p-hydroxymercuribenzoate (PHMB). Functionally, catalyzes both the 5'-exonucleolytic and structure-specific endonucleolytic hydrolysis of DNA branched nucleic acid molecules and probably plays a role in viral genome replication. Active on flap (branched duplex DNA containing a free single-stranded 5'-end), 5'overhangs and pseudo-Y structures. The substrates require a free, single-stranded 5' end, with endonucleolytic hydrolysis occurring at the junction of double- and single-stranded DNA. This function may be used for example to trim such branched molecules generated by Okazaki fragments synthesis during replication. The sequence is that of Flap endonuclease (D15) from Escherichia phage T5 (Enterobacteria phage T5).